Here is a 417-residue protein sequence, read N- to C-terminus: Serine hydroxymethyltransferase (417 aa).

(6S)-5,6,7,8-tetrahydrofolate is bound by residues L117 and 121-123 (GHL). K226 is subject to N6-(pyridoxal phosphate)lysine.

The protein belongs to the SHMT family. As to quaternary structure, homodimer. The cofactor is pyridoxal 5'-phosphate.

The protein resides in the cytoplasm. The catalysed reaction is (6R)-5,10-methylene-5,6,7,8-tetrahydrofolate + glycine + H2O = (6S)-5,6,7,8-tetrahydrofolate + L-serine. It functions in the pathway one-carbon metabolism; tetrahydrofolate interconversion. It participates in amino-acid biosynthesis; glycine biosynthesis; glycine from L-serine: step 1/1. Its function is as follows. Catalyzes the reversible interconversion of serine and glycine with tetrahydrofolate (THF) serving as the one-carbon carrier. This reaction serves as the major source of one-carbon groups required for the biosynthesis of purines, thymidylate, methionine, and other important biomolecules. Also exhibits THF-independent aldolase activity toward beta-hydroxyamino acids, producing glycine and aldehydes, via a retro-aldol mechanism. This is Serine hydroxymethyltransferase from Syntrophus aciditrophicus (strain SB).